The following is a 555-amino-acid chain: Glutamate--tRNA ligase (555 aa).

Positions 100-110 (PNPSGPLHIGH) match the 'HIGH' region motif.

It belongs to the class-I aminoacyl-tRNA synthetase family. Glutamate--tRNA ligase type 2 subfamily.

Its subcellular location is the cytoplasm. The enzyme catalyses tRNA(Glu) + L-glutamate + ATP = L-glutamyl-tRNA(Glu) + AMP + diphosphate. Catalyzes the attachment of glutamate to tRNA(Glu) in a two-step reaction: glutamate is first activated by ATP to form Glu-AMP and then transferred to the acceptor end of tRNA(Glu). This chain is Glutamate--tRNA ligase, found in Methanococcus maripaludis (strain C6 / ATCC BAA-1332).